The chain runs to 183 residues: ATP synthase subunit b, chloroplastic (183 aa).

The chain crosses the membrane as a helical span at residues 28-48 (DIFEANVINILLLLFGLIYVL).

Belongs to the ATPase B chain family. In terms of assembly, F-type ATPases have 2 components, F(1) - the catalytic core - and F(0) - the membrane proton channel. F(1) has five subunits: alpha(3), beta(3), gamma(1), delta(1), epsilon(1). F(0) has four main subunits: a(1), b(1), b'(1) and c(10-14). The alpha and beta chains form an alternating ring which encloses part of the gamma chain. F(1) is attached to F(0) by a central stalk formed by the gamma and epsilon chains, while a peripheral stalk is formed by the delta, b and b' chains.

It localises to the plastid. It is found in the chloroplast thylakoid membrane. In terms of biological role, f(1)F(0) ATP synthase produces ATP from ADP in the presence of a proton or sodium gradient. F-type ATPases consist of two structural domains, F(1) containing the extramembraneous catalytic core and F(0) containing the membrane proton channel, linked together by a central stalk and a peripheral stalk. During catalysis, ATP synthesis in the catalytic domain of F(1) is coupled via a rotary mechanism of the central stalk subunits to proton translocation. Its function is as follows. Component of the F(0) channel, it forms part of the peripheral stalk, linking F(1) to F(0). The chain is ATP synthase subunit b, chloroplastic from Porphyra purpurea (Red seaweed).